We begin with the raw amino-acid sequence, 288 residues long: 4-hydroxybenzoate octaprenyltransferase (288 aa).

Helical transmembrane passes span 23 to 43, 46 to 66, 98 to 118, 141 to 161, 163 to 183, 213 to 233, 234 to 254, and 268 to 288; these read IGSL…GRGI, AKIL…GCVV, ILFV…NSMT, LPQV…FAAV, ESLP…TVAY, LIIG…GWLM, NLGG…THQQ, and AFLN…ISYW.

Belongs to the UbiA prenyltransferase family. Mg(2+) serves as cofactor.

It is found in the cell inner membrane. It carries out the reaction all-trans-octaprenyl diphosphate + 4-hydroxybenzoate = 4-hydroxy-3-(all-trans-octaprenyl)benzoate + diphosphate. It functions in the pathway cofactor biosynthesis; ubiquinone biosynthesis. Catalyzes the prenylation of para-hydroxybenzoate (PHB) with an all-trans polyprenyl group. Mediates the second step in the final reaction sequence of ubiquinone-8 (UQ-8) biosynthesis, which is the condensation of the polyisoprenoid side chain with PHB, generating the first membrane-bound Q intermediate 3-octaprenyl-4-hydroxybenzoate. The protein is 4-hydroxybenzoate octaprenyltransferase of Yersinia pseudotuberculosis serotype IB (strain PB1/+).